Here is a 258-residue protein sequence, read N- to C-terminus: UPF0246 protein YaaA (258 aa).

It belongs to the UPF0246 family.

This chain is UPF0246 protein YaaA, found in Escherichia coli O45:K1 (strain S88 / ExPEC).